A 182-amino-acid polypeptide reads, in one-letter code: ATP synthase subunit b, chloroplastic (182 aa).

The chain crosses the membrane as a helical span at residues 36 to 56; the sequence is ILLLLLGLMYVLKEFLGSILV.

It belongs to the ATPase B chain family. In terms of assembly, F-type ATPases have 2 components, F(1) - the catalytic core - and F(0) - the membrane proton channel. F(1) has five subunits: alpha(3), beta(3), gamma(1), delta(1), epsilon(1). F(0) has four main subunits: a(1), b(1), b'(1) and c(10-14). The alpha and beta chains form an alternating ring which encloses part of the gamma chain. F(1) is attached to F(0) by a central stalk formed by the gamma and epsilon chains, while a peripheral stalk is formed by the delta, b and b' chains.

The protein localises to the plastid. Its subcellular location is the chloroplast thylakoid membrane. Functionally, f(1)F(0) ATP synthase produces ATP from ADP in the presence of a proton or sodium gradient. F-type ATPases consist of two structural domains, F(1) containing the extramembraneous catalytic core and F(0) containing the membrane proton channel, linked together by a central stalk and a peripheral stalk. During catalysis, ATP synthesis in the catalytic domain of F(1) is coupled via a rotary mechanism of the central stalk subunits to proton translocation. Its function is as follows. Component of the F(0) channel, it forms part of the peripheral stalk, linking F(1) to F(0). The sequence is that of ATP synthase subunit b, chloroplastic from Gracilaria tenuistipitata var. liui (Red alga).